The following is a 217-amino-acid chain: NADPH-dependent 3-demethoxyubiquinone 3-hydroxylase, mitochondrial (217 aa).

Residues 1-23 (MSAAGAIAAASVGRLRTGVRRPF) constitute a mitochondrion transit peptide. Repeat copies occupy residues 48 to 129 (AVDR…TALL) and 130 to 217 (GKEG…SERF). The segment at 48–217 (AVDRIIRVDH…SAAIYLSERF (170 aa)) is 2 X approximate tandem repeats. Residue R51 coordinates NADH. Fe cation-binding residues include E60, E90, H93, E142, E178, and H181. Residues Y212 and R216 each contribute to the NADH site.

Belongs to the COQ7 family. Component of a multi-subunit COQ enzyme complex. Interacts with COQ8B and COQ6. Interacts with COQ9. Requires Fe cation as cofactor. As to expression, highly expressed in tissues with high energy demand such as heart, muscle, liver, and kidney.

It is found in the mitochondrion inner membrane. The catalysed reaction is a 5-methoxy-2-methyl-3-(all-trans-polyprenyl)benzoquinone + NADH + O2 = a 3-demethylubiquinone + NAD(+) + H2O. Its pathway is cofactor biosynthesis; ubiquinone biosynthesis. In terms of biological role, catalyzes the hydroxylation of the 5-methoxy-2-methyl-3-(all-trans-polyprenyl)benzoquinone at the C6 position and participates in the biosynthesis of ubiquinone. Catalyzes the reaction through a substrate-mediated reduction pathway, whereby NADH shuttles electrons to 5-methoxy-2-methyl-3-(all-trans-decaprenyl)benzoquinone, which then transfers the electrons to the two Fe(3+) centers. The binding of 5-methoxy-2-methyl-3-(all-trans-polyprenyl)benzoquinone (DMQn) mediates reduction of the diiron center by nicotinamide adenine dinucleotide (NADH) and initiates oxygen activation for subsequent DMQ hydroxylation. The physiological substrates are 5-methoxy-2-methyl-3-(all-trans-nonaprenyl)benzoquinone (DMQ(9)) and 5-methoxy-2-methyl-3-(all-trans-decaprenyl)benzoquinone (DMQ(10)), however in vitro the enzyme does not have any specificity concerning the length of the polyprenyl tail, and accepts tails of various lengths with similar efficiency. Also has a structural role in the COQ enzyme complex, stabilizing other COQ polypeptides. Involved in lifespan determination in a ubiquinone-independent manner. Plays a role in modulating mitochondrial stress responses, acting in the nucleus, perhaps via regulating gene expression, independent of its characterized mitochondrial function in ubiquinone biosynthesis. The protein is NADPH-dependent 3-demethoxyubiquinone 3-hydroxylase, mitochondrial of Mus musculus (Mouse).